The following is a 970-amino-acid chain: m7GpppN-mRNA hydrolase (970 aa).

In terms of domain architecture, Nudix hydrolase spans 101 to 228; that stretch reads KSIPVRGAAI…IKYYLINSMM (128 aa). Serine 116 bears the Phosphoserine mark. Residues 134-155 carry the Nudix box motif; sequence GKISKDENDIDCCIREVKEEIG. Glutamate 149 and glutamate 153 together coordinate Mn(2+). Basic and acidic residues predominate over residues 302–314; sequence QHLKEQSGEHNQQ. 4 disordered regions span residues 302–341, 417–465, 501–520, and 528–692; these read QHLK…ANNK, AVSQ…PKLK, SSQK…NDSV, and YEDF…LSST. Over residues 315–334 the composition is skewed to low complexity; it reads KDQQSSFSSQQQPSIFPSLS. The residue at position 439 (serine 439) is a Phosphoserine. Residues 528-539 are compositionally biased toward acidic residues; the sequence is YEDFESSSDEEV. The span at 560 to 576 shows a compositional bias: basic and acidic residues; that stretch reads SEKDSRRSQKEKPRNDA. Polar residues predominate over residues 577–590; that stretch reads SKTNLNASAESNSV. Over residues 596 to 608 the composition is skewed to low complexity; the sequence is KSSPSTQSKQNSS. The segment covering 625-637 has biased composition (acidic residues); that stretch reads DAYEVFESSSDEE. Threonine 677 carries the phosphothreonine modification. Residues 677-691 are compositionally biased toward polar residues; sequence TESNKSINETVGLSS. Residues serine 679, serine 682, serine 751, serine 771, serine 773, and serine 778 each carry the phosphoserine modification. The tract at residues 831–867 is disordered; that stretch reads LKKNDSTGYPRTEGGPSSEMSTSMKRNDATNNQELDK. Polar residues predominate over residues 848 to 863; it reads SEMSTSMKRNDATNNQ.

This sequence belongs to the Nudix hydrolase family. DCP2 subfamily. Component of the decapping complex composed of DCP1 and DCP2. Interacts with mRNA, LSM2, LSM4 and LSM8. Interacts with EDC3. Mn(2+) is required as a cofactor.

It localises to the cytoplasm. It is found in the P-body. The catalysed reaction is a 5'-end (N(7)-methyl 5'-triphosphoguanosine)-ribonucleoside in mRNA + H2O = N(7)-methyl-GDP + a 5'-end phospho-ribonucleoside in mRNA + 2 H(+). Its function is as follows. Catalytic component of the decapping complex necessary for the degradation of mRNAs, both in normal mRNA turnover and in nonsense-mediated mRNA decay. Removes the 7-methyl guanine cap structure from mRNA molecules, yielding a 5'-phosphorylated mRNA fragment and 7m-GDP. Decapping is the major pathway of mRNA degradation in yeast and occurs through deadenylation, decapping and subsequent 5' to 3' exonucleolytic decay of the transcript body. Blocks autophagy in nutrient-rich conditions by repressing the expression of ATG-related genes through degradation of their transcripts. The sequence is that of m7GpppN-mRNA hydrolase from Saccharomyces cerevisiae (strain ATCC 204508 / S288c) (Baker's yeast).